The following is a 59-amino-acid chain: Phycobilisome degradation protein NblA (59 aa).

The protein to chloroplast ycf18.

In terms of biological role, involved in phycobilisome (PBS) degradation during nutrient deprivation. May mark the PBS for degradation by covalent association with PBS components or may disrupt the PBS via ionic interactions. The chain is Phycobilisome degradation protein NblA from Synechococcus elongatus (strain ATCC 33912 / PCC 7942 / FACHB-805) (Anacystis nidulans R2).